A 278-amino-acid polypeptide reads, in one-letter code: tRNA pseudouridine synthase A (278 aa).

The active-site Nucleophile is the D61. Residue Y119 coordinates substrate.

This sequence belongs to the tRNA pseudouridine synthase TruA family. As to quaternary structure, homodimer.

It catalyses the reaction uridine(38/39/40) in tRNA = pseudouridine(38/39/40) in tRNA. Its function is as follows. Formation of pseudouridine at positions 38, 39 and 40 in the anticodon stem and loop of transfer RNAs. The chain is tRNA pseudouridine synthase A from Oleidesulfovibrio alaskensis (strain ATCC BAA-1058 / DSM 17464 / G20) (Desulfovibrio alaskensis).